A 417-amino-acid chain; its full sequence is NADH-quinone oxidoreductase subunit D (417 aa).

The protein belongs to the complex I 49 kDa subunit family. As to quaternary structure, NDH-1 is composed of 14 different subunits. Subunits NuoB, C, D, E, F, and G constitute the peripheral sector of the complex.

It is found in the cell inner membrane. The enzyme catalyses a quinone + NADH + 5 H(+)(in) = a quinol + NAD(+) + 4 H(+)(out). In terms of biological role, NDH-1 shuttles electrons from NADH, via FMN and iron-sulfur (Fe-S) centers, to quinones in the respiratory chain. The immediate electron acceptor for the enzyme in this species is believed to be ubiquinone. Couples the redox reaction to proton translocation (for every two electrons transferred, four hydrogen ions are translocated across the cytoplasmic membrane), and thus conserves the redox energy in a proton gradient. This is NADH-quinone oxidoreductase subunit D from Azoarcus sp. (strain BH72).